Consider the following 550-residue polypeptide: Glutamyl-tRNA(Gln) amidotransferase subunit A, mitochondrial (550 aa).

Residues Lys-79 and Ser-171 each act as charge relay system in the active site. Ser-195 serves as the catalytic Acyl-ester intermediate. Residues 371–390 (EKDENKVDNDNDDDDDVDEN) form a disordered region.

The protein belongs to the amidase family. GatA subfamily. Subunit of the heterotrimeric GatCAB amidotransferase (AdT) complex, composed of A, B and C subunits.

The protein localises to the mitochondrion. The catalysed reaction is L-glutamyl-tRNA(Gln) + L-glutamine + ATP + H2O = L-glutaminyl-tRNA(Gln) + L-glutamate + ADP + phosphate + H(+). Its function is as follows. Allows the formation of correctly charged Gln-tRNA(Gln) through the transamidation of misacylated Glu-tRNA(Gln) in the mitochondria. The reaction takes place in the presence of glutamine and ATP through an activated gamma-phospho-Glu-tRNA(Gln). This Dictyostelium discoideum (Social amoeba) protein is Glutamyl-tRNA(Gln) amidotransferase subunit A, mitochondrial.